Consider the following 76-residue polypeptide: ATP synthase subunit c (76 aa).

2 helical membrane-spanning segments follow: residues Leu-13–Phe-33 and Phe-55–Ile-75.

Belongs to the ATPase C chain family. F-type ATPases have 2 components, F(1) - the catalytic core - and F(0) - the membrane proton channel. F(1) has five subunits: alpha(3), beta(3), gamma(1), delta(1), epsilon(1). F(0) has three main subunits: a(1), b(2) and c(10-14). The alpha and beta chains form an alternating ring which encloses part of the gamma chain. F(1) is attached to F(0) by a central stalk formed by the gamma and epsilon chains, while a peripheral stalk is formed by the delta and b chains.

Its subcellular location is the cell membrane. In terms of biological role, f(1)F(0) ATP synthase produces ATP from ADP in the presence of a proton or sodium gradient. F-type ATPases consist of two structural domains, F(1) containing the extramembraneous catalytic core and F(0) containing the membrane proton channel, linked together by a central stalk and a peripheral stalk. During catalysis, ATP synthesis in the catalytic domain of F(1) is coupled via a rotary mechanism of the central stalk subunits to proton translocation. Key component of the F(0) channel; it plays a direct role in translocation across the membrane. A homomeric c-ring of between 10-14 subunits forms the central stalk rotor element with the F(1) delta and epsilon subunits. The chain is ATP synthase subunit c from Bifidobacterium longum subsp. infantis (strain ATCC 15697 / DSM 20088 / JCM 1222 / NCTC 11817 / S12).